A 478-amino-acid chain; its full sequence is PRAME family member 4 (478 aa).

One copy of the LRR 1; degenerate repeat lies at 99-126 (RWKLQVLDLQDVCENFWMVWSEAMAHGC). An LRR 2; degenerate repeat occupies 181 to 205 (HLCCKKLKILGMPFRNIRSILKMVN). The stretch at 206–232 (LDCIQEVEVNCKWVLPILTQFTPYLGH) is one LRR 3; degenerate repeat. Residues 233–268 (MRNLQKLILSHMDVSRYVSPEQKKEIVTQFTTQFLK) form an LRR 4; degenerate repeat. LRR repeat units lie at residues 269–294 (LRCL…LSCL), 295–326 (KTSL…SQLK), 327–347 (TLDL…QILL), 351–378 (AATL…ALSR), and 379–403 (CFEL…LLSH).

The protein belongs to the PRAME family.

The protein is PRAME family member 4 of Homo sapiens (Human).